The chain runs to 71 residues: Protein DP71L (71 aa).

2 important for host CHOP inhibition regions span residues 16-18 and 57-61; these read VRF and LSTVL.

This sequence belongs to the asfivirus DP71L family. Interacts (via C-terminus) with host PPP1CB.

Its function is as follows. Interacts with the host phosphatase PP1 catalytic subunit (PPP1CB) and recruits it to dephosphorylate EIF2S1/eIF2alpha and therefore restores the host translation that has been shut-down by the host. Also inhibits the EIF2S1/eIF2alpha-ATF4-DDIT3/CHOP pathway. The chain is Protein DP71L from African swine fever virus (strain Badajoz 1971 Vero-adapted) (Ba71V).